A 194-amino-acid chain; its full sequence is MSKDRRAPHVSSDHPVSGVAGRYATALFELADAEGALDAVAGDLERISAMLNESSDLVRLVRSPIFSAEDQTKAFGAVLEKAGISGLVKNFIGLVIRNRRLFGLSDMIGAYTTLLARKRGEMTADVVSAHPLQAAQVESLKAALKSATGRDVRINTKVDASLLGGLIVTVGSRMVDSSLRTKLNSLKIAMKEAS.

This sequence belongs to the ATPase delta chain family. As to quaternary structure, F-type ATPases have 2 components, F(1) - the catalytic core - and F(0) - the membrane proton channel. F(1) has five subunits: alpha(3), beta(3), gamma(1), delta(1), epsilon(1). F(0) has three main subunits: a(1), b(2) and c(10-14). The alpha and beta chains form an alternating ring which encloses part of the gamma chain. F(1) is attached to F(0) by a central stalk formed by the gamma and epsilon chains, while a peripheral stalk is formed by the delta and b chains.

It localises to the cell inner membrane. Its function is as follows. F(1)F(0) ATP synthase produces ATP from ADP in the presence of a proton or sodium gradient. F-type ATPases consist of two structural domains, F(1) containing the extramembraneous catalytic core and F(0) containing the membrane proton channel, linked together by a central stalk and a peripheral stalk. During catalysis, ATP synthesis in the catalytic domain of F(1) is coupled via a rotary mechanism of the central stalk subunits to proton translocation. This protein is part of the stalk that links CF(0) to CF(1). It either transmits conformational changes from CF(0) to CF(1) or is implicated in proton conduction. This chain is ATP synthase subunit delta, found in Parvibaculum lavamentivorans (strain DS-1 / DSM 13023 / NCIMB 13966).